A 398-amino-acid polypeptide reads, in one-letter code: Immunoglobulin heavy constant gamma 2A (398 aa).

3 Ig-like domains span residues 5–97, 120–219, and 228–324; these read PSVY…KKIE, PSVF…RTIS, and PQVY…KSFS. Intrachain disulfides connect Cys26-Cys81, Cys143-Cys203, and Cys249-Cys307. Asn179 carries N-linked (GlcNAc...) asparagine glycosylation. A helical transmembrane segment spans residues 345–362; that stretch reads GLWTTITIFISLFLLSVC. Residues 363–398 lie on the Cytoplasmic side of the membrane; sequence YSASVTLFKVKWIFSSVVELKQTISPDYRNMIGQGA.

Its subcellular location is the cell membrane. This chain is Immunoglobulin heavy constant gamma 2A, found in Mus musculus (Mouse).